We begin with the raw amino-acid sequence, 372 residues long: Erythronate-4-phosphate dehydrogenase (372 aa).

Residues Ser45 and Thr66 each coordinate substrate. Asp146 lines the NAD(+) pocket. The active site involves Arg209. Residue Asp233 coordinates NAD(+). Residue Glu238 is part of the active site. His255 serves as the catalytic Proton donor. An NAD(+)-binding site is contributed by Gly258. Tyr259 lines the substrate pocket.

Belongs to the D-isomer specific 2-hydroxyacid dehydrogenase family. PdxB subfamily. As to quaternary structure, homodimer.

It localises to the cytoplasm. The enzyme catalyses 4-phospho-D-erythronate + NAD(+) = (R)-3-hydroxy-2-oxo-4-phosphooxybutanoate + NADH + H(+). It participates in cofactor biosynthesis; pyridoxine 5'-phosphate biosynthesis; pyridoxine 5'-phosphate from D-erythrose 4-phosphate: step 2/5. Functionally, catalyzes the oxidation of erythronate-4-phosphate to 3-hydroxy-2-oxo-4-phosphonooxybutanoate. The polypeptide is Erythronate-4-phosphate dehydrogenase (Blochmanniella floridana).